A 274-amino-acid polypeptide reads, in one-letter code: Protein bax (274 aa).

Positions 32 to 64 (TTASQKSHLTKASNKQVSSKQEYSRNSAKSSSL) are enriched in polar residues. Residues 32–74 (TTASQKSHLTKASNKQVSSKQEYSRNSAKSSSLPDLRKYPSGT) are disordered. 247-254 (GYSTKGKS) lines the ATP pocket.

This is Protein bax (bax) from Escherichia coli (strain K12).